The following is a 163-amino-acid chain: Nitrogen regulatory protein (163 aa).

A PTS EIIA type-2 domain is found at 12–156 (SVLNRECTRS…EELYQIITDT (145 aa)). H73 (tele-phosphohistidine intermediate) is an active-site residue.

It is found in the cytoplasm. Its function is as follows. Seems to have a role in regulating nitrogen assimilation. This Escherichia coli (strain K12) protein is Nitrogen regulatory protein (ptsN).